The sequence spans 191 residues: Chromobox protein homolog 5 (191 aa).

4 positions are modified to phosphoserine: serine 11, serine 12, serine 13, and serine 14. In terms of domain architecture, Chromo 1 spans 20 to 78 (YVVEKVLDRRVVKGQVEYLLKWKGFSEEHNTWEPEKNLDCPELISEFMKKYKKMKEGEN). Lysine 32 is covalently cross-linked (Glycyl lysine isopeptide (Lys-Gly) (interchain with G-Cter in SUMO2)). Lysine 40 is modified (N6-acetyllysine). Residues 70–117 (YKKMKEGENNKPREKSESNKRKSNFSNSADDIKSKKKREQSNDIARGF) form a disordered region. Positions 73 to 89 (MKEGENNKPREKSESNK) are enriched in basic and acidic residues. Lysine 91 is covalently cross-linked (Glycyl lysine isopeptide (Lys-Gly) (interchain with G-Cter in SUMO2)). Phosphoserine is present on residues serine 92, serine 95, and serine 97. Glycyl lysine isopeptide (Lys-Gly) (interchain with G-Cter in SUMO2) cross-links involve residues lysine 102, lysine 106, lysine 154, and lysine 184. Residues 121–179 (LEPEKIIGATDSCGDLMFLMKWKDTDEADLVLAKEANVKCPQIVIAFYEERLTWHAYPE) form the Chromo 2; shadow subtype domain.

As to quaternary structure, homodimer. Interacts with histone H3 methylated at 'Lys-9'. Interacts (via Chromo 2; shadow subtype domain) with the MIS12 complex subunit NSL1; the interaction is direct, involves dimeric CBX5, and occurs during interphase. Interacts with POGZ; POGZ and PXVXL motif-containing proteins such as INCENP and TRIM28 compete for interaction with CBX5. Interacts with LRIF1 (via PxVxL motif). Interacts with INCENP. Interacts with TRIM24. Interacts (via the chromoshadow domain) with ATRX; the interaction is direct. Interacts (via the chromoshadow domain) with CHAF1A; the interaction is direct. Interacts (via the chromoshadow domain) with LBR; the interaction is direct. Interacts (via the chromoshadow domain) with NIPBL; the interaction is direct. Interacts (via the chromoshadow domain) with SP100; the interaction is direct. Interacts (via the chromoshadow domain) with STAM2; the interaction is direct. Interacts (via the chromoshadow domain) with TRIM28; the interaction is direct. Interacts (via the chromoshadow domain) with CBX3; the interaction is direct. Interacts with PRR14 (via N-terminus). Interacts with RRP1B. Interacts with HNRNPU (via C-terminus); this interaction is, at least in part, RNA-dependent. Interacts with ZNF263; recruited to the SIX3 promoter along with other proteins involved in chromatin modification and transcriptional corepression where it contributes to transcriptional repression. Interacts with AURKB during mitosis. Interacts with CHAMP1. Interacts with BAHD1. Interacts with HP1BP3. Interacts with CHD3. Interacts with CHD4. Interacts with SMYD5. Interacts with KMT5B. Interacts with KMT5C. (Microbial infection) Interacts with JC virus agnoprotein; this interaction induces the dissociation of CBX5 from LBR, resulting in destabilization of the nuclear envelope. Post-translationally, phosphorylation of HP1 and LBR may be responsible for some of the alterations in chromatin organization and nuclear structure which occur at various times during the cell cycle. Phosphorylated during interphase and possibly hyper-phosphorylated during mitosis. Ubiquitinated.

The protein resides in the nucleus. It is found in the chromosome. It localises to the centromere. Component of heterochromatin that recognizes and binds histone H3 tails methylated at 'Lys-9' (H3K9me), leading to epigenetic repression. In contrast, it is excluded from chromatin when 'Tyr-41' of histone H3 is phosphorylated (H3Y41ph). May contribute to the association of heterochromatin with the inner nuclear membrane by interactions with the lamin-B receptor (LBR). Involved in the formation of kinetochore through interaction with the MIS12 complex subunit NSL1. Required for the formation of the inner centromere. This Homo sapiens (Human) protein is Chromobox protein homolog 5 (CBX5).